Consider the following 369-residue polypeptide: Adenosine 3'-phospho 5'-phosphosulfate transporter 2 (369 aa).

N-linked (GlcNAc...) asparagine glycosylation occurs at asparagine 39. 6 helical membrane passes run 46–66, 79–99, 115–135, 138–158, 168–188, and 191–211; these read LTQF…YGYL, YGWY…LIEL, MLIA…LGYL, PTQV…GVFI, VSAA…DSTI, and NFNL…AVIG. A glycan (N-linked (GlcNAc...) asparagine) is linked at asparagine 222. Transmembrane regions (helical) follow at residues 235–255, 266–285, 292–314, and 317–337; these read IGFV…PAVA, GYAF…VLAL, LLAV…LFFA, and FTFQ…LNVY.

Belongs to the nucleotide-sugar transporter family. SLC35B subfamily.

The protein localises to the golgi apparatus membrane. The enzyme catalyses 3'-phosphoadenylyl sulfate(in) + adenosine 3',5'-bisphosphate(out) = 3'-phosphoadenylyl sulfate(out) + adenosine 3',5'-bisphosphate(in). In terms of biological role, probably functions as a 3'-phosphoadenylyl sulfate:adenosine 3',5'-bisphosphate antiporter at the Golgi membranes. Mediates the transport from the cytosol into the lumen of the Golgi of 3'-phosphoadenylyl sulfate/adenosine 3'-phospho 5'-phosphosulfate (PAPS), a universal sulfuryl donor for sulfation events that take place in that compartment. This Mus musculus (Mouse) protein is Adenosine 3'-phospho 5'-phosphosulfate transporter 2.